A 461-amino-acid polypeptide reads, in one-letter code: Mycosin-3 (461 aa).

A signal peptide spans 1 to 25 (MIRAAFACLAATVVVAGWWTPPAWA). The Peptidase S8 domain maps to 64 to 397 (DPGVPTPSQT…AGNLDAVAAL (334 aa)). Catalysis depends on charge relay system residues Asp95, His126, and Ser342. The chain crosses the membrane as a helical span at residues 432–452 (AFAGAAALSVLVGLTAATVAI).

Belongs to the peptidase S8 family.

It localises to the cell membrane. The chain is Mycosin-3 from Mycobacterium tuberculosis (strain ATCC 25618 / H37Rv).